A 421-amino-acid chain; its full sequence is ATP-dependent RNA helicase RhlB (421 aa).

A Q motif motif is present at residues 9–37 (QKFSDFALHPAVIEALEKKGFHNCTPIQA). A Helicase ATP-binding domain is found at 40–219 (LPLTLEGRDV…FEQMNNAEYV (180 aa)). Position 53–60 (53–60 (AQTGTGKT)) interacts with ATP. Positions 165 to 168 (DEAD) match the DEAD box motif. The 146-residue stretch at 245-390 (RLLQTLLEEE…VSKYNPDALM (146 aa)) folds into the Helicase C-terminal domain. The disordered stretch occupies residues 396-421 (PLRLTRARPGNGPRRNGPPRNRRRSG). The segment covering 403–414 (RPGNGPRRNGPP) has biased composition (low complexity).

Belongs to the DEAD box helicase family. RhlB subfamily. As to quaternary structure, component of the RNA degradosome, which is a multiprotein complex involved in RNA processing and mRNA degradation.

It is found in the cytoplasm. The catalysed reaction is ATP + H2O = ADP + phosphate + H(+). Functionally, DEAD-box RNA helicase involved in RNA degradation. Has RNA-dependent ATPase activity and unwinds double-stranded RNA. The polypeptide is ATP-dependent RNA helicase RhlB (Klebsiella pneumoniae subsp. pneumoniae (strain ATCC 700721 / MGH 78578)).